The following is a 336-amino-acid chain: Large ribosomal subunit protein mL39 (336 aa).

In terms of domain architecture, TGS spans 60-126 (EKIEVKHVGK…TKSCEIKFLT (67 aa)). Lys-123 bears the N6-acetyllysine mark.

Belongs to the mitochondrion-specific ribosomal protein mL39 family. Component of the mitochondrial ribosome large subunit (39S) which comprises a 16S rRNA and about 50 distinct proteins.

It localises to the mitochondrion. The polypeptide is Large ribosomal subunit protein mL39 (Mrpl39) (Mus musculus (Mouse)).